A 380-amino-acid polypeptide reads, in one-letter code: Septin homolog spn6 (380 aa).

A Septin-type G domain is found at 27–297 (KECGLTIMLC…ERYRREQLTN (271 aa)). A G1 motif region spans residues 37–44 (GASGTGKT). GTP contacts are provided by residues 37–44 (GASGTGKT), Thr72, Gly98, 177–185 (KADTFTTPE), and Arg246. Positions 95 to 98 (DTPG) are G3 motif. The G4 motif stretch occupies residues 176-179 (AKAD). Positions 304 to 380 (KLKKEHYERL…KSYKGRGHKK (77 aa)) form a coiled coil.

This sequence belongs to the TRAFAC class TrmE-Era-EngA-EngB-Septin-like GTPase superfamily. Septin GTPase family. As to quaternary structure, component of the sporulation-specific septin complex composed of at least spn2, spn5, spn6 and spn7.

The protein localises to the cytoplasm. The protein resides in the forespore membrane. Septin-like protein involved in the correct orientation of forespore membrane extension during sporulation. The polypeptide is Septin homolog spn6 (spn6) (Schizosaccharomyces pombe (strain 972 / ATCC 24843) (Fission yeast)).